Here is a 179-residue protein sequence, read N- to C-terminus: Cytochrome b6-f complex iron-sulfur subunit 1 (179 aa).

The chain crosses the membrane as a helical span at residues 21 to 43; the sequence is LLTFGTVTGVALGALYPVVNYFI. The Rieske domain maps to 61-162; sequence GNDVSVSKFL…AKTENDKIVL (102 aa). Positions 108, 110, 126, and 129 each coordinate [2Fe-2S] cluster. Residues cysteine 113 and cysteine 128 are joined by a disulfide bond.

It belongs to the Rieske iron-sulfur protein family. In terms of assembly, the 4 large subunits of the cytochrome b6-f complex are cytochrome b6, subunit IV (17 kDa polypeptide, PetD), cytochrome f and the Rieske protein, while the 4 small subunits are PetG, PetL, PetM and PetN. The complex functions as a dimer. [2Fe-2S] cluster serves as cofactor.

The protein localises to the cellular thylakoid membrane. It catalyses the reaction 2 oxidized [plastocyanin] + a plastoquinol + 2 H(+)(in) = 2 reduced [plastocyanin] + a plastoquinone + 4 H(+)(out). In terms of biological role, component of the cytochrome b6-f complex, which mediates electron transfer between photosystem II (PSII) and photosystem I (PSI), cyclic electron flow around PSI, and state transitions. The chain is Cytochrome b6-f complex iron-sulfur subunit 1 from Trichormus variabilis (strain ATCC 29413 / PCC 7937) (Anabaena variabilis).